The chain runs to 77 residues: U8-lycotoxin-Ls1p (77 aa).

An N-terminal signal peptide occupies residues 1-20 (MKLMIFTGLVLFAIVSLIEA). Residues 21-26 (QAENEK) constitute a propeptide that is removed on maturation.

Belongs to the neurotoxin 19 (CSTX) family. 08 (U8-Lctx) subfamily. In terms of processing, contains 4 disulfide bonds. In terms of tissue distribution, expressed by the venom gland.

Its subcellular location is the secreted. The protein is U8-lycotoxin-Ls1p of Lycosa singoriensis (Wolf spider).